The sequence spans 162 residues: D-aminoacyl-tRNA deacylase (162 aa).

A Gly-cisPro motif, important for rejection of L-amino acids motif is present at residues 145–146; sequence GP.

The protein belongs to the DTD family. Homodimer.

The protein localises to the cytoplasm. It catalyses the reaction glycyl-tRNA(Ala) + H2O = tRNA(Ala) + glycine + H(+). It carries out the reaction a D-aminoacyl-tRNA + H2O = a tRNA + a D-alpha-amino acid + H(+). An aminoacyl-tRNA editing enzyme that deacylates mischarged D-aminoacyl-tRNAs. Also deacylates mischarged glycyl-tRNA(Ala), protecting cells against glycine mischarging by AlaRS. Acts via tRNA-based rather than protein-based catalysis; rejects L-amino acids rather than detecting D-amino acids in the active site. By recycling D-aminoacyl-tRNA to D-amino acids and free tRNA molecules, this enzyme counteracts the toxicity associated with the formation of D-aminoacyl-tRNA entities in vivo and helps enforce protein L-homochirality. This is D-aminoacyl-tRNA deacylase from Bifidobacterium longum (strain DJO10A).